The chain runs to 353 residues: Photosystem II protein D1 (353 aa).

At Thr-2 the chain carries N-acetylthreonine. Thr-2 bears the Phosphothreonine mark. 3 helical membrane passes run Tyr-29 to Ser-46, His-118 to Leu-133, and Trp-142 to Ala-156. Position 118 (His-118) interacts with chlorophyll a. Tyr-126 contacts pheophytin a. 2 residues coordinate [CaMn4O5] cluster: Asp-170 and Glu-189. The chain crosses the membrane as a helical span at residues Phe-197 to Leu-218. Residue His-198 coordinates chlorophyll a. A quinone contacts are provided by residues His-215 and Ser-264–Phe-265. A Fe cation-binding site is contributed by His-215. Residue His-272 coordinates Fe cation. Residues Phe-274–Leu-288 traverse the membrane as a helical segment. [CaMn4O5] cluster-binding residues include His-332, Glu-333, Asp-342, and Ala-344. Positions Ala-345–Gly-353 are excised as a propeptide.

The protein belongs to the reaction center PufL/M/PsbA/D family. In terms of assembly, PSII is composed of 1 copy each of membrane proteins PsbA, PsbB, PsbC, PsbD, PsbE, PsbF, PsbH, PsbI, PsbJ, PsbK, PsbL, PsbM, PsbT, PsbX, PsbY, PsbZ, Psb30/Ycf12, at least 3 peripheral proteins of the oxygen-evolving complex and a large number of cofactors. It forms dimeric complexes. The cofactor is The D1/D2 heterodimer binds P680, chlorophylls that are the primary electron donor of PSII, and subsequent electron acceptors. It shares a non-heme iron and each subunit binds pheophytin, quinone, additional chlorophylls, carotenoids and lipids. D1 provides most of the ligands for the Mn4-Ca-O5 cluster of the oxygen-evolving complex (OEC). There is also a Cl(-1) ion associated with D1 and D2, which is required for oxygen evolution. The PSII complex binds additional chlorophylls, carotenoids and specific lipids.. In terms of processing, phosphorylated in both bundle sheath and mesophyll cells, phosphorylation increases when cells are grown under high rather than low light regimes (70 vs 900 umol photons/m-2/s). Post-translationally, PSII is subject to light-induced damage, in particular to D1. Damaged protein is degraded by Deg1 and FtsH proteases and replaced. In maize mesophyll cells D1 degradation is less extensive in grana (stacked) vs stroma (unstacked) lamellae, in part due to exclusion of FtsH from the grana. D1 degradation is faster in bundle sheath cells. Tyr-161 forms a radical intermediate that is referred to as redox-active TyrZ, YZ or Y-Z. In terms of processing, C-terminally processed by CTPA; processing is essential to allow assembly of the oxygen-evolving complex and thus photosynthetic growth.

Its subcellular location is the plastid. It localises to the chloroplast thylakoid membrane. It carries out the reaction 2 a plastoquinone + 4 hnu + 2 H2O = 2 a plastoquinol + O2. Its function is as follows. Photosystem II (PSII) is a light-driven water:plastoquinone oxidoreductase that uses light energy to abstract electrons from H(2)O, generating O(2) and a proton gradient subsequently used for ATP formation. It consists of a core antenna complex that captures photons, and an electron transfer chain that converts photonic excitation into a charge separation. The D1/D2 (PsbA/PsbD) reaction center heterodimer binds P680, the primary electron donor of PSII as well as several subsequent electron acceptors. This is Photosystem II protein D1 from Zea mays (Maize).